The sequence spans 315 residues: Protein translocase subunit SecF (315 aa).

6 consecutive transmembrane segments (helical) span residues 12-32 (AWIVSSLLVLISIFAMAISWA), 136-156 (ALFRSGVLALVISLLGIIIYL), 166-186 (VFAIIALLYDALITMGAFAIF), 188-208 (LVGGVEVDSLFLVALLTIIGF), 247-267 (SINTSLTTSLPLVAIFLFGGD), and 271-291 (FFALALIIGFASGVYSSIFMA).

The protein belongs to the SecD/SecF family. SecF subfamily. In terms of assembly, forms a complex with SecD. Part of the essential Sec protein translocation apparatus which comprises SecA, SecYEG and auxiliary proteins SecDF. Other proteins may also be involved.

It is found in the cell inner membrane. Part of the Sec protein translocase complex. Interacts with the SecYEG preprotein conducting channel. SecDF uses the proton motive force (PMF) to complete protein translocation after the ATP-dependent function of SecA. Its function is as follows. Probably participates in protein translocation into and across both the cytoplasmic and thylakoid membranes in cyanobacterial cells. This is Protein translocase subunit SecF from Synechocystis sp. (strain ATCC 27184 / PCC 6803 / Kazusa).